The primary structure comprises 398 residues: DNA polymerase IV (398 aa).

In terms of domain architecture, UmuC spans 5–187 (IFLVDMNAFF…LSIKSMHGVG (183 aa)). Mg(2+) contacts are provided by Asp9 and Asp105. The active site involves Glu106.

Belongs to the DNA polymerase type-Y family. Monomer. Mg(2+) serves as cofactor.

It is found in the cytoplasm. The enzyme catalyses DNA(n) + a 2'-deoxyribonucleoside 5'-triphosphate = DNA(n+1) + diphosphate. Its function is as follows. Poorly processive, error-prone DNA polymerase involved in untargeted mutagenesis. Copies undamaged DNA at stalled replication forks, which arise in vivo from mismatched or misaligned primer ends. These misaligned primers can be extended by PolIV. Exhibits no 3'-5' exonuclease (proofreading) activity. May be involved in translesional synthesis, in conjunction with the beta clamp from PolIII. The sequence is that of DNA polymerase IV from Alkaliphilus oremlandii (strain OhILAs) (Clostridium oremlandii (strain OhILAs)).